Consider the following 481-residue polypeptide: Pre-mRNA-splicing factor sap114 (481 aa).

Residues 1 to 15 show a composition bias toward polar residues; that stretch reads MSSLMEFQDRNTTNN. Residues 1-34 form a disordered region; the sequence is MSSLMEFQDRNTTNNETEHQKSITDQSSSVPAGV. SURP motif repeat units follow at residues 44–86 and 147–189; these read IIDK…HPYY and VLRL…YPYF. Disordered stretches follow at residues 335-373 and 452-481; these read PSLA…QKPV and GVEI…NKRR. 2 stretches are compositionally biased toward polar residues: residues 345-368 and 467-481; these read ISST…TQPK and ATQS…NKRR.

As to quaternary structure, belongs to the 40S cdc5-associated complex (or cwf complex), a spliceosome sub-complex reminiscent of a late-stage spliceosome composed of the U2, U5 and U6 snRNAs and at least brr2, cdc5, cwf2/prp3, cwf3/syf1, cwf4/syf3, cwf5/ecm2, spp42/cwf6, cwf7/spf27, cwf8, cwf9, cwf10, cwf11, cwf12, prp45/cwf13, cwf14, cwf15, cwf16, cwf17, cwf18, cwf19, cwf20, cwf21, cwf22, cwf23, cwf24, cwf25, cwf26, cyp7/cwf27, cwf28, cwf29/ist3, lea1, msl1, prp5/cwf1, prp10, prp12/sap130, prp17, prp22, sap61, sap62, sap114, sap145, slu7, smb1, smd1, smd3, smf1, smg1 and syf2.

The protein localises to the nucleus. Functionally, involved in pre-mRNA splicing. May be involved in endoplasmic reticulum-associated protein degradation (ERAD) and required for growth at low and high temperatures. The chain is Pre-mRNA-splicing factor sap114 (sap114) from Schizosaccharomyces pombe (strain 972 / ATCC 24843) (Fission yeast).